The sequence spans 219 residues: Small ribosomal subunit protein uS19 (219 aa).

The unknown stretch occupies residues M1–Q128. The interval M129–K219 is small ribosomal subunit protein uS19.

This sequence belongs to the universal ribosomal protein uS19 family.

Its function is as follows. Protein S19 forms a complex with S13 that binds strongly to the 16S ribosomal RNA. This Aquifex pyrophilus protein is Small ribosomal subunit protein uS19.